Reading from the N-terminus, the 692-residue chain is Elongation factor G (692 aa).

A tr-type G domain is found at 8 to 282; sequence EKTRNIGIMA…AVLDYLPAPT (275 aa). GTP contacts are provided by residues 17–24, 81–85, and 135–138; these read AHIDAGKT, DTPGH, and NKMD. Phosphoserine is present on residues Ser-213, Ser-302, Ser-569, and Ser-680.

Belongs to the TRAFAC class translation factor GTPase superfamily. Classic translation factor GTPase family. EF-G/EF-2 subfamily. Phosphorylated on threonine residue(s). Phosphorylated by PrkC and dephosphorylated by PrpC, in vitro.

It localises to the cytoplasm. In terms of biological role, catalyzes the GTP-dependent ribosomal translocation step during translation elongation. During this step, the ribosome changes from the pre-translocational (PRE) to the post-translocational (POST) state as the newly formed A-site-bound peptidyl-tRNA and P-site-bound deacylated tRNA move to the P and E sites, respectively. Catalyzes the coordinated movement of the two tRNA molecules, the mRNA and conformational changes in the ribosome. The sequence is that of Elongation factor G (fusA) from Bacillus subtilis (strain 168).